The chain runs to 178 residues: ATP synthase subunit delta (178 aa).

It belongs to the ATPase delta chain family. F-type ATPases have 2 components, F(1) - the catalytic core - and F(0) - the membrane proton channel. F(1) has five subunits: alpha(3), beta(3), gamma(1), delta(1), epsilon(1). F(0) has three main subunits: a(1), b(2) and c(10-14). The alpha and beta chains form an alternating ring which encloses part of the gamma chain. F(1) is attached to F(0) by a central stalk formed by the gamma and epsilon chains, while a peripheral stalk is formed by the delta and b chains.

It is found in the cell inner membrane. Functionally, f(1)F(0) ATP synthase produces ATP from ADP in the presence of a proton or sodium gradient. F-type ATPases consist of two structural domains, F(1) containing the extramembraneous catalytic core and F(0) containing the membrane proton channel, linked together by a central stalk and a peripheral stalk. During catalysis, ATP synthesis in the catalytic domain of F(1) is coupled via a rotary mechanism of the central stalk subunits to proton translocation. In terms of biological role, this protein is part of the stalk that links CF(0) to CF(1). It either transmits conformational changes from CF(0) to CF(1) or is implicated in proton conduction. In Marinomonas sp. (strain MWYL1), this protein is ATP synthase subunit delta.